The following is a 180-amino-acid chain: Insulin-like growth factor 2 (180 aa).

Positions 1–24 are cleaved as a signal peptide; it reads MGIPVGKSMLVLLISLAFALCCIA. The tract at residues 25–52 is b; the sequence is AYGPGETLCGGELVDTLQFVCSDRGFYF. Disulfide bonds link Cys-33–Cys-71, Cys-45–Cys-84, and Cys-70–Cys-75. Residues 53–64 form a c region; that stretch reads SRPSSRANRRSR. The a stretch occupies residues 65–85; the sequence is GIVEECCFRSCDLALLETYCA. The interval 86–91 is d; the sequence is TPAKSE. Positions 92–180 are cleaved as a propeptide — e peptide; that stretch reads RDVSTSQAVL…ASSEMSSNHQ (89 aa). The interval 157–180 is disordered; it reads PLIVLPPKDPAHGGASSEMSSNHQ.

It belongs to the insulin family. As to quaternary structure, interacts with MYORG; this interaction is required for IGF2 secretion. Interacts with integrins ITGAV:ITGB3 and ITGA6:ITGB4; integrin-binding is required for IGF2 signaling. Interacts with IGFBP2. Proteolytically processed by PCSK4, proIGF2 is cleaved at Arg-128 and Arg-92 to generate big-IGF2 and mature IGF2. In terms of tissue distribution, expressed in the heart, blood serum, kidney and skeletal muscle including the tibialis anterior muscle.

It localises to the secreted. In terms of biological role, the insulin-like growth factors possess growth-promoting activity. Major fetal growth hormone in mammals. Plays a key role in regulating fetoplacental development. IGF2 is influenced by placental lactogen. Also involved in tissue differentiation. In adults, involved in glucose metabolism in adipose tissue, skeletal muscle and liver. Acts as a ligand for integrin which is required for IGF2 signaling. Positively regulates myogenic transcription factor MYOD1 function by facilitating the recruitment of transcriptional coactivators, thereby controlling muscle terminal differentiation. Inhibits myoblast differentiation and modulates metabolism via increasing the mitochondrial respiration rate. Its function is as follows. Preptin undergoes glucose-mediated co-secretion with insulin, and acts as a physiological amplifier of glucose-mediated insulin secretion. Exhibits osteogenic properties by increasing osteoblast mitogenic activity through phosphoactivation of MAPK1 and MAPK3. The polypeptide is Insulin-like growth factor 2 (Mus musculus (Mouse)).